We begin with the raw amino-acid sequence, 943 residues long: Protein translocase subunit SecA (943 aa).

ATP contacts are provided by residues Q77, 95–99, and D484; that span reads GEGKT.

It belongs to the SecA family. In terms of assembly, monomer and homodimer. Part of the essential Sec protein translocation apparatus which comprises SecA, SecYEG and auxiliary proteins SecDF. Other proteins may also be involved.

Its subcellular location is the cell membrane. The protein resides in the cytoplasm. The catalysed reaction is ATP + H2O + cellular proteinSide 1 = ADP + phosphate + cellular proteinSide 2.. Part of the Sec protein translocase complex. Interacts with the SecYEG preprotein conducting channel. Has a central role in coupling the hydrolysis of ATP to the transfer of proteins into and across the cell membrane, serving as an ATP-driven molecular motor driving the stepwise translocation of polypeptide chains across the membrane. The chain is Protein translocase subunit SecA from Mesoplasma florum (strain ATCC 33453 / NBRC 100688 / NCTC 11704 / L1) (Acholeplasma florum).